The chain runs to 196 residues: Molybdenum cofactor guanylyltransferase (196 aa).

GTP contacts are provided by residues 10–12 (LAG), Lys23, Asn51, Asp69, and Asp99. Asp99 serves as a coordination point for Mg(2+).

This sequence belongs to the MobA family. Monomer. The cofactor is Mg(2+).

It is found in the cytoplasm. It catalyses the reaction Mo-molybdopterin + GTP + H(+) = Mo-molybdopterin guanine dinucleotide + diphosphate. Its function is as follows. Transfers a GMP moiety from GTP to Mo-molybdopterin (Mo-MPT) cofactor (Moco or molybdenum cofactor) to form Mo-molybdopterin guanine dinucleotide (Mo-MGD) cofactor. In Shewanella frigidimarina (strain NCIMB 400), this protein is Molybdenum cofactor guanylyltransferase.